The chain runs to 452 residues: Tripartite motif-containing protein 49 (452 aa).

The RING-type zinc-finger motif lies at 15–56 (CPLCMNYFIDPVTIDCGHSFCRPCFYLNWQDIPFLVQCSECT). Residues 88–129 (SEEQMCGTHRETKKIFCEVDRSLLCLLCSSSQEHRYHRHRPI) form a B box-type zinc finger. Positions 93, 96, 115, and 121 each coordinate Zn(2+). The B30.2/SPRY domain occupies 269–452 (ELSAGPITGL…LRPIFCCIHF (184 aa)).

The protein belongs to the TRIM/RBCC family. As to expression, preferentially expressed in testis.

This chain is Tripartite motif-containing protein 49 (TRIM49), found in Homo sapiens (Human).